The following is an 861-amino-acid chain: Nuclear cap-binding protein complex subunit 1 (861 aa).

Positions 22 to 30 (RMPKRQRIP) match the Nuclear localization signal motif. The region spanning 36-264 (CKEMMPDIRT…LVRVVLPNVK (229 aa)) is the MIF4G domain.

The protein belongs to the NCBP1 family. As to quaternary structure, component of the nuclear cap-binding complex (CBC), a heterodimer composed of STO1/CBC1 and CBC2 that interacts with capped RNAs. The complex interacts strongly with the importin subunit alpha SRP1. The SRP1-CBC trimer also binds to capped RNAs, but formation of the importin alpha/beta heterodimer upon binding of KAP95 to SRP1 in the cytoplasm causes dissociation of CBC from the RNA. The CBC complex is part of the commitment complex 1 (CC1), binding to the cap of pre-mRNA and interacting with U1 snRNP subunits MUD2 and SNU56. The CBC complex is part of the NRD1 complex, composed of CBC2, NAB1, NRD1, SEN1 and STO1/CBC2. The CBC complex also interacts with NPL3 and eIF4G (TIF4631 and TIF4632).

It is found in the nucleus. It localises to the cytoplasm. The protein localises to the perinuclear region. Functionally, component of the CBC complex, which binds co-transcriptionally to the 5'-cap of pre-mRNAs and is involved in maturation, export and degradation of nuclear mRNAs. The CBC complex is required for efficient pre-mRNA splicing through efficient commitment complex and spliceosome formation. Together with NPL3, the CBC complex is required for export of mRNAs out of the nucleus. The CBC complex is also involved in nuclear mRNA degradation, probably by directing the mRNAs to the sites of degradation. Affects replication of the positive-strand RNA virus BMV. This chain is Nuclear cap-binding protein complex subunit 1 (STO1), found in Saccharomyces cerevisiae (strain ATCC 204508 / S288c) (Baker's yeast).